A 1694-amino-acid polypeptide reads, in one-letter code: Immunoglobulin A1 protease autotransporter (1694 aa).

The signal sequence occupies residues 1–25; that stretch reads MLNKKFKLNFIALTVAYALTPYTEA. The Peptidase S6 domain occupies 26–332; the sequence is ALVRDDVDYQ…NIYKPEFAKT (307 aa). The active site involves serine 288. A disordered region spans residues 991–1403; the sequence is VEKRNQTVDT…GSDRSTVALR (413 aa). The segment covering 997–1021 has biased composition (polar residues); the sequence is TVDTTNITTPNNIQADVPSVPSNNE. Low complexity predominate over residues 1037–1047; sequence TPSETTETVAE. Positions 1049–1061 are enriched in basic and acidic residues; sequence SKQESKTVEKNEQ. Positions 1082–1095 are enriched in polar residues; it reads KANTQTNEVAQSGS. Composition is skewed to basic and acidic residues over residues 1104–1124 and 1142–1154; these read EIKE…KDEI and APKE…KVEE. 2 stretches are compositionally biased toward polar residues: residues 1155-1178 and 1199-1210; these read TQVQ…SPNS and VSKNQTENTTDQ. Positions 1211-1226 are enriched in basic and acidic residues; the sequence is PTEREKTAKVETEKTQ. Polar residues-rich tracts occupy residues 1227–1247, 1255–1297, and 1308–1336; these read EPPQ…TVQP, NVPT…TAIT, and TETA…NSES. Low complexity predominate over residues 1352-1370; sequence ETSAEETTAASTDETTIAD. Over residues 1374-1384 the composition is skewed to basic residues; sequence RSKPNRRSRRS. The Autotransporter domain maps to 1442-1694; the sequence is NNEGQYNVWV…TAELKLSFSF (253 aa).

It localises to the periplasm. It is found in the secreted. The protein resides in the cell surface. Its subcellular location is the cell outer membrane. The catalysed reaction is Cleavage of immunoglobulin A molecules at certain Pro-|-Xaa bonds in the hinge region. No small molecule substrates are known.. In terms of biological role, virulence factor; cleaves host immunoglobulin A producing intact Fc and Fab fragments. The chain is Immunoglobulin A1 protease autotransporter (iga) from Haemophilus influenzae (strain ATCC 51907 / DSM 11121 / KW20 / Rd).